A 216-amino-acid chain; its full sequence is Small ribosomal subunit protein uS3c (216 aa).

The region spanning 43–118 (IKNYIQKNRR…RLKIAITRVE (76 aa)) is the KH type-2 domain.

Belongs to the universal ribosomal protein uS3 family. In terms of assembly, part of the 30S ribosomal subunit.

It is found in the plastid. Its subcellular location is the chloroplast. In Dioscorea elephantipes (Elephant's foot yam), this protein is Small ribosomal subunit protein uS3c (rps3).